Consider the following 490-residue polypeptide: Glutamate--tRNA ligase (490 aa).

A 'HIGH' region motif is present at residues 15–25 (PSPTGYLHVGG). Positions 259–263 (KLSKR) match the 'KMSKS' region motif. Residue K262 coordinates ATP.

Belongs to the class-I aminoacyl-tRNA synthetase family. Glutamate--tRNA ligase type 1 subfamily. In terms of assembly, monomer.

The protein localises to the cytoplasm. It catalyses the reaction tRNA(Glu) + L-glutamate + ATP = L-glutamyl-tRNA(Glu) + AMP + diphosphate. Functionally, catalyzes the attachment of glutamate to tRNA(Glu) in a two-step reaction: glutamate is first activated by ATP to form Glu-AMP and then transferred to the acceptor end of tRNA(Glu). The polypeptide is Glutamate--tRNA ligase (Bdellovibrio bacteriovorus (strain ATCC 15356 / DSM 50701 / NCIMB 9529 / HD100)).